The sequence spans 340 residues: Methionine import ATP-binding protein MetN (340 aa).

Positions 2–241 (IRIENLTKIY…PQSSVAKEFI (240 aa)) constitute an ABC transporter domain. ATP is bound at residue 38–45 (GLSGAGKS).

Belongs to the ABC transporter superfamily. Methionine importer (TC 3.A.1.24) family. The complex is composed of two ATP-binding proteins (MetN), two transmembrane proteins (MetI) and a solute-binding protein (MetQ).

It is found in the cell membrane. It catalyses the reaction L-methionine(out) + ATP + H2O = L-methionine(in) + ADP + phosphate + H(+). The catalysed reaction is D-methionine(out) + ATP + H2O = D-methionine(in) + ADP + phosphate + H(+). Its function is as follows. Part of the ABC transporter complex MetNIQ involved in methionine import. Responsible for energy coupling to the transport system. The sequence is that of Methionine import ATP-binding protein MetN from Desulfitobacterium hafniense (strain Y51).